Here is a 185-residue protein sequence, read N- to C-terminus: dTTP/UTP pyrophosphatase (185 aa).

Catalysis depends on D64, which acts as the Proton acceptor.

The protein belongs to the Maf family. YhdE subfamily. Requires a divalent metal cation as cofactor.

Its subcellular location is the cytoplasm. It catalyses the reaction dTTP + H2O = dTMP + diphosphate + H(+). The enzyme catalyses UTP + H2O = UMP + diphosphate + H(+). Functionally, nucleoside triphosphate pyrophosphatase that hydrolyzes dTTP and UTP. May have a dual role in cell division arrest and in preventing the incorporation of modified nucleotides into cellular nucleic acids. The chain is dTTP/UTP pyrophosphatase from Leptospira borgpetersenii serovar Hardjo-bovis (strain JB197).